We begin with the raw amino-acid sequence, 492 residues long: N-succinylglutamate 5-semialdehyde dehydrogenase (492 aa).

220–225 is an NAD(+) binding site; sequence GSANTG. Catalysis depends on residues Glu243 and Cys277.

The protein belongs to the aldehyde dehydrogenase family. AstD subfamily.

The catalysed reaction is N-succinyl-L-glutamate 5-semialdehyde + NAD(+) + H2O = N-succinyl-L-glutamate + NADH + 2 H(+). It participates in amino-acid degradation; L-arginine degradation via AST pathway; L-glutamate and succinate from L-arginine: step 4/5. In terms of biological role, catalyzes the NAD-dependent reduction of succinylglutamate semialdehyde into succinylglutamate. The chain is N-succinylglutamate 5-semialdehyde dehydrogenase from Escherichia coli O17:K52:H18 (strain UMN026 / ExPEC).